We begin with the raw amino-acid sequence, 253 residues long: Probable U3 small nucleolar RNA-associated protein 11 (253 aa).

The interval methionine 1 to lysine 26 is disordered. Glycyl lysine isopeptide (Lys-Gly) (interchain with G-Cter in SUMO2) cross-links involve residues lysine 74, lysine 83, and lysine 86. Threonine 90 carries the phosphothreonine modification. Residues lysine 103, lysine 120, lysine 143, lysine 144, lysine 180, lysine 211, lysine 218, lysine 235, and lysine 236 each participate in a glycyl lysine isopeptide (Lys-Gly) (interchain with G-Cter in SUMO2) cross-link. Serine 241 is subject to Phosphoserine. A Glycyl lysine isopeptide (Lys-Gly) (interchain with G-Cter in SUMO2) cross-link involves residue lysine 246.

Belongs to the UTP11 family. In terms of assembly, part of the small subunit (SSU) processome, composed of more than 70 proteins and the RNA chaperone small nucleolar RNA (snoRNA) U3.

Its subcellular location is the nucleus. It localises to the nucleolus. Its function is as follows. Part of the small subunit (SSU) processome, first precursor of the small eukaryotic ribosomal subunit. During the assembly of the SSU processome in the nucleolus, many ribosome biogenesis factors, an RNA chaperone and ribosomal proteins associate with the nascent pre-rRNA and work in concert to generate RNA folding, modifications, rearrangements and cleavage as well as targeted degradation of pre-ribosomal RNA by the RNA exosome. Involved in nucleolar processing of pre-18S ribosomal RNA. The chain is Probable U3 small nucleolar RNA-associated protein 11 from Homo sapiens (Human).